Reading from the N-terminus, the 128-residue chain is MRTALLLLAALAVATGPALTLRCHVCTSSSNCKHSVVCPASSRFCKTTNTVEPLRGNLVKKDCAESCTPSYTLQGQVSSGTSSTQCCQEDLCNEKLHNAAPTRTALAHSALSLGLALSLLAVILAPSL.

The N-terminal stretch at 1 to 20 (MRTALLLLAALAVATGPALT) is a signal peptide. The region spanning 21-108 (LRCHVCTSSS…AAPTRTALAH (88 aa)) is the UPAR/Ly6 domain. Cystine bridges form between C23–C45, C26–C32, C38–C63, C67–C86, and C87–C92. N98 carries GPI-anchor amidated asparagine lipidation. The propeptide at 99 to 128 (AAPTRTALAHSALSLGLALSLLAVILAPSL) is removed in mature form.

As to expression, expressed exclusively at the outer cell surface of transitional epithelia and the keratinocyte of stratified squamous epithelia.

It localises to the cell membrane. Its function is as follows. May act as a specification marker at earliest stage specification of lymphocytes between B- and T-cell development. Marks the earliest stage of B-cell specification. This chain is Lymphocyte antigen 6D (LY6D), found in Homo sapiens (Human).